A 901-amino-acid polypeptide reads, in one-letter code: Probable inorganic carbon transporter subunit DabA (901 aa).

4 residues coordinate Zn(2+): Cys424, Asp426, His606, and Cys621.

This sequence belongs to the inorganic carbon transporter (TC 9.A.2) DabA family. Forms a complex with DabB. It depends on Zn(2+) as a cofactor.

Its subcellular location is the cell membrane. In terms of biological role, part of an energy-coupled inorganic carbon pump. This Staphylococcus aureus (strain MSSA476) protein is Probable inorganic carbon transporter subunit DabA.